The primary structure comprises 1074 residues: DNA-directed RNA polymerase subunit beta (1074 aa).

This sequence belongs to the RNA polymerase beta chain family. In plastids the minimal PEP RNA polymerase catalytic core is composed of four subunits: alpha, beta, beta', and beta''. When a (nuclear-encoded) sigma factor is associated with the core the holoenzyme is formed, which can initiate transcription.

The protein localises to the plastid. It localises to the chloroplast. The enzyme catalyses RNA(n) + a ribonucleoside 5'-triphosphate = RNA(n+1) + diphosphate. DNA-dependent RNA polymerase catalyzes the transcription of DNA into RNA using the four ribonucleoside triphosphates as substrates. This is DNA-directed RNA polymerase subunit beta from Chara vulgaris (Common stonewort).